Consider the following 175-residue polypeptide: uncharacterized protein (175 aa).

This is an uncharacterized protein from Archaeoglobus fulgidus (strain ATCC 49558 / DSM 4304 / JCM 9628 / NBRC 100126 / VC-16).